The following is a 312-amino-acid chain: Ribosomal RNA small subunit methyltransferase H (312 aa).

Residues 38–40, Asp58, Phe84, Asp104, and Gln111 each bind S-adenosyl-L-methionine; that span reads GGH.

It belongs to the methyltransferase superfamily. RsmH family.

Its subcellular location is the cytoplasm. It carries out the reaction cytidine(1402) in 16S rRNA + S-adenosyl-L-methionine = N(4)-methylcytidine(1402) in 16S rRNA + S-adenosyl-L-homocysteine + H(+). Functionally, specifically methylates the N4 position of cytidine in position 1402 (C1402) of 16S rRNA. The sequence is that of Ribosomal RNA small subunit methyltransferase H from Alcanivorax borkumensis (strain ATCC 700651 / DSM 11573 / NCIMB 13689 / SK2).